The sequence spans 402 residues: Peptidyl-prolyl cis-trans isomerase FKBP8 (402 aa).

The span at 28–39 (DGVDDAEEEDDL) shows a compositional bias: acidic residues. Residues 28 to 54 (DGVDDAEEEDDLSGLPPLEDMGQPTVE) are disordered. The PPIase FKBP-type domain maps to 110 to 194 (GQVVTVHLQM…CLEVTLKTAE (85 aa)). Residues 211 to 244 (ANRKRECGNAHYQRADFVLAANSYDLAIKAITSN) form a TPR 1 repeat. Glycyl lysine isopeptide (Lys-Gly) (interchain with G-Cter in ubiquitin) cross-links involve residues Lys-239, Lys-261, Lys-263, and Lys-274. TPR repeat units follow at residues 262 to 295 (VKCLNNLAASQLKLDHYRAALRSCSQVLEHQPDN) and 296 to 329 (IKALFRKGKVLAQQGEYSEAIPILRAALKLEPSN). Phosphoserine is present on Ser-286. Glycyl lysine isopeptide (Lys-Gly) (interchain with G-Cter in ubiquitin) cross-links involve residues Lys-297, Lys-304, Lys-324, Lys-330, Lys-338, Lys-341, and Lys-342. The chain crosses the membrane as a helical span at residues 380–400 (WLFGATAVALGGVALSVVIAA).

As to quaternary structure, homomultimers or heteromultimers (Potential). Forms heterodimer with calmodulin. When activated by calmodulin and calcium, interacts with the BH4 domain of BCL2 and weakly with BCLX isoform Bcl-X(L). Does not bind and inhibit calcineurin. Interacts with ZFYVE27; may negatively regulate ZFYVE27 phosphorylation. It depends on Ca(2+) as a cofactor. Post-translationally, ubiquitinated by PRKN during mitophagy, leading to its degradation and enhancement of mitophagy. Deubiquitinated by USP30. Detected throughout the embryonic body, in caudal neural tube, limbs and head. Detected in adult retina, brain, heart, kidney, liver, pancreas, lung, testis and urinary bladder (at protein level). Detected in adult brain, kidney, liver, testis and trigeminal nerve, and in embryo. Detected at lower levels in lung, spleen, heart and ovary. Widely expressed in forebrain. Detected in the Purkinje cell layer in the cerebellum and in hippocampus neurons.

It is found in the mitochondrion membrane. The catalysed reaction is [protein]-peptidylproline (omega=180) = [protein]-peptidylproline (omega=0). Functionally, constitutively inactive PPiase, which becomes active when bound to calmodulin and calcium. Seems to act as a chaperone for BCL2, targets it to the mitochondria and modulates its phosphorylation state. The BCL2/FKBP8/calmodulin/calcium complex probably interferes with the binding of BCL2 to its targets. The active form of FKBP8 may therefore play a role in the regulation of apoptosis. Required for normal embryonic development. The chain is Peptidyl-prolyl cis-trans isomerase FKBP8 (Fkbp8) from Mus musculus (Mouse).